The chain runs to 807 residues: 85/88 kDa calcium-independent phospholipase A2 (807 aa).

A Phosphoserine modification is found at Ser-13. 9 ANK repeats span residues 120 to 147 (WTVTHLAVELGIRECFHHSRIISCANST), 151 to 181 (EGCTPLHLACRKGDSEILVELVQYCHAQMDV), 185 to 215 (KGETAFHYAVQGDNPQVLQLLGKNASAGLNQ), 219 to 248 (QGLTPLHLACKMGKQEMVRVLLLCNARCNI), 251 to 281 (PGGFPIHTAMKFSQKGCAEMIISMDSNQIHS), 286 to 312 (YGASPLHWAKNAEMARMLLKRGCDVDS), 316 to 345 (SGNTALHVAVMRNRFDCVMVLLTYGANAGA), 349 to 378 (HGNTPLHLAMSKDNMEMVKALIVFGAEVDT), and 382 to 403 (FGETPALIASKISKLITRKALL). Transmembrane regions (helical) follow at residues 481-501 (LLCLDGGGVKGLVIIQLLIAI) and 512-532 (LFDWVAGTSTGGILALAILHS). One can recognise a PNPLA domain in the interval 482–666 (LCLDGGGVKG…LANNPTLDAM (185 aa)). The GXGXXG motif lies at 486–491 (GGGVKG). The GXSXG signature appears at 518-522 (GTSTG). Ser-520 (nucleophile) is an active-site residue. Asp-653 (proton acceptor) is an active-site residue. Positions 653 to 655 (DGG) match the DGA/G motif. Residues 678–687 (RKGQGNKVKK) form a calmodulin-binding (1-9-14 motif) region. The segment at 749 to 760 (AWCEMVGIQYFR) is calmodulin-binding (IQ motif).

In terms of assembly, homodimer formed by catalytic domains tightly interacting through a large hydrophobic interface. The contact area involves 3 alpha helices, several loops and a part of the beta sheet from each monomer. Both active sites of the dimer are in close proximity adopting an open conformation that provide sufficient space for phospholipid access and favoring cooperativity in deacylation-reacylation reactions. Each monomer has 9 ankyrin repeats stacked side-by-side in an elongated structure oriented outwards from the catalytic core. In terms of tissue distribution, expressed in neurons of central and peripheral nervous system. Highly expressed in Purkinje cells in cerebellum and dorsal and ventral horn neurons in the spinal cord. Expressed in testis (at protein level). Expressed in skeletal muscle (at protein level).

The protein resides in the cytoplasm. It is found in the cell membrane. It localises to the mitochondrion. The protein localises to the cell projection. Its subcellular location is the pseudopodium. It carries out the reaction a 1,2-diacyl-sn-glycero-3-phosphocholine + H2O = a 1-acyl-sn-glycero-3-phosphocholine + a fatty acid + H(+). The catalysed reaction is a 1-O-alkyl-2-acyl-sn-glycero-3-phosphocholine + H2O = a 1-O-alkyl-sn-glycero-3-phosphocholine + a fatty acid + H(+). It catalyses the reaction 1,2-dihexadecanoyl-sn-glycero-3-phosphocholine + H2O = 1-hexadecanoyl-sn-glycero-3-phosphocholine + hexadecanoate + H(+). The enzyme catalyses 1-hexadecanoyl-2-(9Z-octadecenoyl)-sn-glycero-3-phosphocholine + H2O = 1-hexadecanoyl-sn-glycero-3-phosphocholine + (9Z)-octadecenoate + H(+). It carries out the reaction 1-hexadecanoyl-2-(9Z,12Z-octadecadienoyl)-sn-glycero-3-phosphocholine + H2O = (9Z,12Z)-octadecadienoate + 1-hexadecanoyl-sn-glycero-3-phosphocholine + H(+). The catalysed reaction is 1-hexadecanoyl-2-(5Z,8Z,11Z,14Z-eicosatetraenoyl)-sn-glycero-3-phosphocholine + H2O = 1-hexadecanoyl-sn-glycero-3-phosphocholine + (5Z,8Z,11Z,14Z)-eicosatetraenoate + H(+). It catalyses the reaction 1-octadecanoyl-2-(5Z,8Z,11Z,14Z-eicosatetraenoyl)-sn-glycero-3-phosphocholine + H2O = 1-octadecanoyl-sn-glycero-3-phosphocholine + (5Z,8Z,11Z,14Z)-eicosatetraenoate + H(+). The enzyme catalyses 1-hexadecanoyl-2-(5Z,8Z,11Z,14Z-eicosatetraenoyl)-sn-glycero-3-phosphoethanolamine + H2O = 1-hexadecanoyl-sn-glycero-3-phosphoethanolamine + (5Z,8Z,11Z,14Z)-eicosatetraenoate + H(+). It carries out the reaction 1,2-dihexadecanoyl-sn-glycero-3-phosphate + H2O = 1-hexadecanoyl-sn-glycero-3-phosphate + hexadecanoate + H(+). The catalysed reaction is a 1-acyl-sn-glycero-3-phosphocholine + H2O = sn-glycerol 3-phosphocholine + a fatty acid + H(+). It catalyses the reaction 1-hexadecanoyl-sn-glycero-3-phosphocholine + H2O = sn-glycerol 3-phosphocholine + hexadecanoate + H(+). The enzyme catalyses 1-(5Z,8Z,11Z,14Z-eicosatetraenoyl)-sn-glycero-3-phosphocholine + H2O = sn-glycerol 3-phosphocholine + (5Z,8Z,11Z,14Z)-eicosatetraenoate + H(+). It carries out the reaction 2-(5Z,8Z,11Z,14Z)-eicosatetraenoyl-sn-glycero-3-phosphocholine + H2O = sn-glycerol 3-phosphocholine + (5Z,8Z,11Z,14Z)-eicosatetraenoate + H(+). The catalysed reaction is 1-O-hexadecyl-2-(5Z,8Z,11Z,14Z)-eicosatetraenoyl-sn-glycero-3-phosphocholine + H2O = 1-O-hexadecyl-sn-glycero-3-phosphocholine + (5Z,8Z,11Z,14Z)-eicosatetraenoate + H(+). It catalyses the reaction 1-O-hexadecyl-2-acetyl-sn-glycero-3-phosphocholine + H2O = 1-O-hexadecyl-sn-glycero-3-phosphocholine + acetate + H(+). The enzyme catalyses hexadecanoyl-CoA + H2O = hexadecanoate + CoA + H(+). It carries out the reaction 1',3'-bis[1,2-di-(9Z-octadecenoyl)-sn-glycero-3-phospho]-glycerol + H2O = 1'-[1,2-di-(9Z-octadecenoyl)-sn-glycero-3-phospho]-3'-[1-(9Z-octadecenoyl)-sn-glycero-3-phospho]-glycerol + (9Z)-octadecenoate + H(+). The catalysed reaction is 1'-[1,2-di-(9Z-octadecenoyl)-sn-glycero-3-phospho]-3'-[1-(9Z-octadecenoyl)-sn-glycero-3-phospho]-glycerol + H2O = 1',3'-bis-[1-(9Z-octadecenoyl)-sn-glycero-3-phospho]-glycerol + (9Z)-octadecenoate + H(+). It catalyses the reaction 1',3'-bis-[1,2-di-(9Z,12Z-octadecadienoyl)-sn-glycero-3-phospho]-glycerol + H2O = 1'-[1,2-di-(9Z,12Z-octadecadienoyl)-sn-glycero-3-phospho]-3'-[1-(9Z,12Z-octadecadienoyl)-sn-glycero-3-phospho]-glycerol + (9Z,12Z)-octadecadienoate + H(+). The enzyme catalyses 1-octadecanoyl-2-(15-hydroxy-(5Z,8Z,11Z,13E)-eicosatetraenoyl)-sn-glycero-3-phosphoethanolamine + H2O = 1-octadecanoyl-sn-glycero-3-phosphoethanolamine + 15-hydroxy-(5Z,8Z,11Z,13E)-eicosatetraenoate + H(+). With respect to regulation, inhibited by calcium-activated calmodulin. Activated by ATP. Inhibited by bromoenol lactone (BEL). Calcium-independent phospholipase involved in phospholipid remodeling with implications in cellular membrane homeostasis, mitochondrial integrity and signal transduction. Hydrolyzes the ester bond of the fatty acyl group attached at sn-1 or sn-2 position of phospholipids (phospholipase A1 and A2 activity respectively), producing lysophospholipids that are used in deacylation-reacylation cycles. Hydrolyzes both saturated and unsaturated long fatty acyl chains in various glycerophospholipid classes such as phosphatidylcholines, phosphatidylethanolamines and phosphatidates, with a preference for hydrolysis at sn-2 position. Can further hydrolyze lysophospholipids carrying saturated fatty acyl chains (lysophospholipase activity). Upon oxidative stress, contributes to remodeling of mitochondrial phospholipids in pancreatic beta cells, in a repair mechanism to reduce oxidized lipid content. Preferentially hydrolyzes oxidized polyunsaturated fatty acyl chains from cardiolipins, yielding monolysocardiolipins that can be reacylated with unoxidized fatty acyls to regenerate native cardiolipin species. Hydrolyzes oxidized glycerophosphoethanolamines present in pancreatic islets, releasing oxidized polyunsaturated fatty acids such as hydroxyeicosatetraenoates (HETEs). Has thioesterase activity toward fatty-acyl CoA releasing CoA-SH known to facilitate fatty acid transport and beta-oxidation in mitochondria particularly in skeletal muscle. Plays a role in regulation of membrane dynamics and homeostasis. Selectively hydrolyzes sn-2 arachidonoyl group in plasmalogen phospholipids, structural components of lipid rafts and myelin. Regulates F-actin polymerization at the pseudopods, which is required for both speed and directionality of MCP1/CCL2-induced monocyte chemotaxis. Targets membrane phospholipids to produce potent lipid signaling messengers. Generates lysophosphatidate (LPA, 1-acyl-glycerol-3-phosphate), which acts via G-protein receptors in various cell types. Has phospholipase A2 activity toward platelet-activating factor (PAF, 1-O-alkyl-2-acetyl-sn-glycero-3-phosphocholine), likely playing a role in inactivation of this potent pro-inflammatory signaling lipid. In response to glucose, amplifies calcium influx in pancreatic beta cells to promote INS secretion. This Mus musculus (Mouse) protein is 85/88 kDa calcium-independent phospholipase A2 (Pla2g6).